Here is a 182-residue protein sequence, read N- to C-terminus: Adenine phosphoribosyltransferase (182 aa).

This sequence belongs to the purine/pyrimidine phosphoribosyltransferase family. In terms of assembly, homodimer.

The protein resides in the cytoplasm. It carries out the reaction AMP + diphosphate = 5-phospho-alpha-D-ribose 1-diphosphate + adenine. Its pathway is purine metabolism; AMP biosynthesis via salvage pathway; AMP from adenine: step 1/1. Catalyzes a salvage reaction resulting in the formation of AMP, that is energically less costly than de novo synthesis. In Stutzerimonas stutzeri (strain A1501) (Pseudomonas stutzeri), this protein is Adenine phosphoribosyltransferase.